A 335-amino-acid polypeptide reads, in one-letter code: Phosphate acyltransferase (335 aa).

Belongs to the PlsX family. As to quaternary structure, homodimer. Probably interacts with PlsY.

The protein localises to the cytoplasm. It carries out the reaction a fatty acyl-[ACP] + phosphate = an acyl phosphate + holo-[ACP]. It participates in lipid metabolism; phospholipid metabolism. Functionally, catalyzes the reversible formation of acyl-phosphate (acyl-PO(4)) from acyl-[acyl-carrier-protein] (acyl-ACP). This enzyme utilizes acyl-ACP as fatty acyl donor, but not acyl-CoA. The sequence is that of Phosphate acyltransferase from Streptococcus pyogenes serotype M18 (strain MGAS8232).